Consider the following 422-residue polypeptide: Chorismate synthase (422 aa).

Positions 43 and 49 each coordinate NADP(+). Residues 143–145 (RSS), 264–265 (QA), Gly-309, 324–328 (KPIST), and Arg-350 each bind FMN.

This sequence belongs to the chorismate synthase family. Homotetramer. The cofactor is FMNH2.

It catalyses the reaction 5-O-(1-carboxyvinyl)-3-phosphoshikimate = chorismate + phosphate. It participates in metabolic intermediate biosynthesis; chorismate biosynthesis; chorismate from D-erythrose 4-phosphate and phosphoenolpyruvate: step 7/7. Catalyzes the anti-1,4-elimination of the C-3 phosphate and the C-6 proR hydrogen from 5-enolpyruvylshikimate-3-phosphate (EPSP) to yield chorismate, which is the branch point compound that serves as the starting substrate for the three terminal pathways of aromatic amino acid biosynthesis. This reaction introduces a second double bond into the aromatic ring system. The polypeptide is Chorismate synthase (Corynebacterium jeikeium (strain K411)).